A 517-amino-acid polypeptide reads, in one-letter code: PSTB2-interacting protein 1 (517 aa).

As to quaternary structure, interacts with PDR17/PSTB2 and SCS2.

Functionally, phosphatidic acid-binding protein involved in interorganelle phosphatidylserine (PtdSer) transport. Linkks a PtdSer donor membrane (via binding of SCS2 and phosphatidic acid present in the donor membrane) with an acceptor membrane (via its interaction with PDR17), forming a zone of apposition that facilitates PtdSer transfer. In Saccharomyces cerevisiae (strain ATCC 204508 / S288c) (Baker's yeast), this protein is PSTB2-interacting protein 1.